A 346-amino-acid chain; its full sequence is Ephrin-B1 (346 aa).

Positions 1–27 (MARPGQRWLGKWLVAMVVWALCRLATP) are cleaved as a signal peptide. Over 28–237 (LAKNLEPVSW…GDPDGFFNSK (210 aa)) the chain is Extracellular. One can recognise an Ephrin RBD domain in the interval 30–164 (KNLEPVSWSS…TRTMKIIMKV (135 aa)). 2 cysteine pairs are disulfide-bonded: Cys64-Cys101 and Cys89-Cys153. The N-linked (GlcNAc...) asparagine glycan is linked to Asn139. The interval 169 to 228 (NAVTPEQLTTSRPSKEADNTVKMATQAPGSRGSLGDSDGKHETVNQEEKSGPGASGGSSG) is disordered. The segment covering 205-218 (SDGKHETVNQEEKS) has biased composition (basic and acidic residues). A helical membrane pass occupies residues 238–258 (VALFAAVGAGCVIFLLIIIFL). Over 259 to 346 (TVLLLKLRKR…QSPANIYYKV (88 aa)) the chain is Cytoplasmic. Residues 260-273 (VLLLKLRKRHRKHT) carry the Nuclear localization signal motif. Residues 263 to 294 (LKLRKRHRKHTQQRAAALSLSTLASPKGGSGT) form an interaction with ZHX2 region. A phosphoserine mark is found at Ser281 and Ser287. The PDZ-binding motif lies at 344–346 (YKV).

The protein belongs to the ephrin family. In terms of assembly, interacts (via PDZ-binding motif) with GRIP1 and GRIP2 (via PDZ domain 6). Interacts with TLE1. The intracellular domain peptide interacts with ZHX2; the interaction enhances ZHX2 transcriptional repression activity. Post-translationally, inducible phosphorylation of tyrosine residues in the cytoplasmic domain. Proteolytically processed. The ectodomain is cleaved, probably by a metalloprotease, to produce a membrane-tethered C-terminal fragment. This fragment is then further processed by the gamma-secretase complex to yield a soluble intracellular domain peptide which can translocate to the nucleus. The intracellular domain peptide is highly labile suggesting that it is targeted for degradation by the proteasome. In terms of tissue distribution, widely expressed. Detected in both neuronal and non-neuronal tissues. Seems to have particularly strong expression in retina, sciatic nerve, heart and spinal cord.

It is found in the cell membrane. The protein resides in the membrane raft. It localises to the nucleus. Cell surface transmembrane ligand for Eph receptors, a family of receptor tyrosine kinases which are crucial for migration, repulsion and adhesion during neuronal, vascular and epithelial development. Binding to Eph receptors residing on adjacent cells leads to contact-dependent bidirectional signaling into neighboring cells. Shows high affinity for the receptor tyrosine kinase EPHB1/ELK. Can also bind EPHB2 and EPHB3. Binds to, and induces collapse of, commissural axons/growth cones in vitro. May play a role in constraining the orientation of longitudinally projecting axons. In Homo sapiens (Human), this protein is Ephrin-B1 (EFNB1).